A 278-amino-acid polypeptide reads, in one-letter code: Large ribosomal subunit protein uL2 (278 aa).

A compositionally biased stretch (basic residues) spans 212-221 (NRWLGKRPHN). The tract at residues 212-278 (NRWLGKRPHN…ILSSRHNRKK (67 aa)) is disordered.

Belongs to the universal ribosomal protein uL2 family. Part of the 50S ribosomal subunit. Forms a bridge to the 30S subunit in the 70S ribosome.

Functionally, one of the primary rRNA binding proteins. Required for association of the 30S and 50S subunits to form the 70S ribosome, for tRNA binding and peptide bond formation. It has been suggested to have peptidyltransferase activity; this is somewhat controversial. Makes several contacts with the 16S rRNA in the 70S ribosome. The polypeptide is Large ribosomal subunit protein uL2 (Methylorubrum populi (strain ATCC BAA-705 / NCIMB 13946 / BJ001) (Methylobacterium populi)).